The sequence spans 618 residues: Protein fem-1 homolog C (618 aa).

7 ANK repeats span residues 2–31 (DLKT…DREV), 40–70 (NGAT…PVEL), 82–111 (EGAP…SVNN), 115–144 (TNST…DLEV), 148–177 (HGHT…DVNR), 181–210 (KGNT…SMEK), and 213–243 (YGMT…GLAE). TPR repeat units lie at residues 245–279 (ISAL…RHSE) and 337–370 (SYYI…QQSN). ANK repeat units follow at residues 482–524 (NGFS…DVNS) and 528–557 (DDNS…HFDS).

Belongs to the fem-1 family. Component of a CRL2 E3 ubiquitin-protein ligase complex, also named ECS (Elongin BC-CUL2/5-SOCS-box protein) complex.

Its pathway is protein modification; protein ubiquitination. Its function is as follows. Substrate-recognition component of a Cul2-RING (CRL2) E3 ubiquitin-protein ligase complex of the DesCEND (destruction via C-end degrons) pathway, which recognizes a C-degron located at the extreme C terminus of target proteins, leading to their ubiquitination and degradation. The C-degron recognized by the DesCEND pathway is usually a motif of less than ten residues and can be present in full-length proteins, truncated proteins or proteolytically cleaved forms. The CRL2(FEM1C) complex specifically recognizes proteins with an arginine at the C-terminus: recognizes and binds proteins ending with -Lys/Arg-Xaa-Arg and -Lys/Arg-Xaa-Xaa-Arg C-degrons, leading to their ubiquitination and degradation. This Danio rerio (Zebrafish) protein is Protein fem-1 homolog C.